Here is a 148-residue protein sequence, read N- to C-terminus: Large ribosomal subunit protein bL28c (148 aa).

The transit peptide at 1–71 (MAASGMLISN…PLKPSLQPVA (71 aa)) directs the protein to the chloroplast.

Component of the chloroplast large ribosomal subunit (LSU). Mature 70S chloroplast ribosomes of higher plants consist of a small (30S) and a large (50S) subunit. The 30S small subunit contains 1 molecule of ribosomal RNA (16S rRNA) and 24 different proteins. The 50S large subunit contains 3 rRNA molecules (23S, 5S and 4.5S rRNA) and 33 different proteins.

It is found in the plastid. The protein resides in the chloroplast. Its function is as follows. Component of the chloroplast ribosome (chloro-ribosome), a dedicated translation machinery responsible for the synthesis of chloroplast genome-encoded proteins, including proteins of the transcription and translation machinery and components of the photosynthetic apparatus. The protein is Large ribosomal subunit protein bL28c (RPL28) of Spinacia oleracea (Spinach).